The chain runs to 464 residues: Soluble pyridine nucleotide transhydrogenase (464 aa).

Position 35 to 44 (Asp-35 to Cys-44) interacts with FAD.

This sequence belongs to the class-I pyridine nucleotide-disulfide oxidoreductase family. FAD is required as a cofactor.

It is found in the cytoplasm. It catalyses the reaction NAD(+) + NADPH = NADH + NADP(+). Its function is as follows. Conversion of NADPH, generated by peripheral catabolic pathways, to NADH, which can enter the respiratory chain for energy generation. In Ectopseudomonas mendocina (strain ymp) (Pseudomonas mendocina), this protein is Soluble pyridine nucleotide transhydrogenase.